The primary structure comprises 139 residues: Probable disulfide formation protein C 2 (139 aa).

A helical transmembrane segment spans residues 6 to 25; sequence KYHIAIAWMIATSAMLISLF. C35 and C38 are joined by a disulfide. Helical transmembrane passes span 40–59 and 66–83; these read YQRMAMYPLVLILGIGMYRK and YAFPFTCIGLILSVYQIT. Cysteines 95 and 101 form a disulfide. A helical membrane pass occupies residues 110 to 133; that stretch reads GFISIPMLSFIGFLVIIILIYIES.

The protein belongs to the DsbB family. BdbC subfamily.

It localises to the cell membrane. Its function is as follows. Required for disulfide bond formation in some proteins. The polypeptide is Probable disulfide formation protein C 2 (bdbC2) (Bacillus cereus (strain ATCC 10987 / NRS 248)).